The sequence spans 225 residues: MKFNSISPNKQHHTGFTTSNNENLNQQLNQVLILLQTLQSQAKKIASFQNQTYEWNLKHHQNLKNVLKSFNRLNSIIDSKGSNNELNEKDNNEFENGVTFHQKIINTYDPLDPFSEELENLIMQIDRGLFHQLRDDSLEIIYPFILKWLKENNSLVLSLVLIWESSTKFHYLLNKKKFKEINKKILDCIVDYENKGIISTLINQNEFPFSDDEYNNLKKFLNDYS.

A compositionally biased stretch (polar residues) spans 1–19; it reads MKFNSISPNKQHHTGFTTS. Residues 1 to 21 are disordered; the sequence is MKFNSISPNKQHHTGFTTSNN.

This is an uncharacterized protein from Dictyostelium discoideum (Social amoeba).